Consider the following 135-residue polypeptide: Interleukin-4 (135 aa).

Positions 1–24 are cleaved as a signal peptide; it reads MGLTYQLIPVLVCLLVCTSHLVHG. 3 cysteine pairs are disulfide-bonded: cysteine 27–cysteine 135, cysteine 48–cysteine 85, and cysteine 70–cysteine 105. An N-linked (GlcNAc...) asparagine glycan is attached at asparagine 62.

Belongs to the IL-4/IL-13 family.

Its subcellular location is the secreted. In terms of biological role, participates in at least several B-cell activation processes as well as of other cell types. It is a costimulator of DNA-synthesis. It induces the expression of class II MHC molecules on resting B-cells. It enhances both secretion and cell surface expression of IgE and IgG1. It also regulates the expression of the low affinity Fc receptor for IgE (CD23) on both lymphocytes and monocytes. Positively regulates IL31RA expression in macrophages. Stimulates autophagy in dendritic cells by interfering with mTORC1 signaling and through the induction of RUFY4. The polypeptide is Interleukin-4 (IL4) (Bubalus bubalis (Domestic water buffalo)).